The chain runs to 602 residues: Pro-neuregulin-1, membrane-bound isoform (602 aa).

At 1 to 206 (MWATSEGPLQ…MEAEELYQKR (206 aa)) the chain is on the extracellular side. Asn21 is a glycosylation site (N-linked (GlcNAc...) asparagine). In terms of domain architecture, Ig-like C2-type spans 29-123 (PKLKEMKNQE…DSTKASVIIT (95 aa)). Cys49 and Cys105 are oxidised to a cystine. Residues Asn113 and Asn126 are each glycosylated (N-linked (GlcNAc...) asparagine). Positions 137 to 181 (HLTKCDIKQKAFCVNGGECYMVKDLPNPPRYLCRCPNEFTGDRCQ) constitute an EGF-like domain. 3 disulfide bridges follow: Cys141–Cys155, Cys149–Cys169, and Cys171–Cys180. Residues 207 to 229 (VLTITGICIALLVVGIMCVVAYC) form a helical membrane-spanning segment. The Cytoplasmic portion of the chain corresponds to 230–602 (KTKKQRKKLH…VIANQDPIAV (373 aa)). Disordered stretches follow at residues 293-366 (ETSF…EGNS), 391-421 (MTTPARMSPVDFHTPTSPKSPPSEMSPPVSS), 460-479 (FNSFHNNPTHESNSLPPSPL), and 486-553 (EYET…FLSI). The segment covering 294–314 (TSFSTSHYTSTTHHSMTVTQT) has biased composition (low complexity). Residues 315 to 324 (PSHSWSNGHT) are compositionally biased toward polar residues. Low complexity predominate over residues 325 to 341 (ESILSESHSVLVSSSVE). The segment covering 460 to 474 (FNSFHNNPTHESNSL) has biased composition (polar residues). The span at 504–514 (TNSRRVKRTKP) shows a compositional bias: basic residues. Residues 527-536 (DTSSQSTSSE) show a composition bias toward low complexity.

Belongs to the neuregulin family. Proteolytic cleavage close to the plasma membrane on the external face leads to the release of the soluble growth factor form. Post-translationally, extensive glycosylation precedes the proteolytic cleavage.

The protein resides in the cell membrane. It is found in the secreted. Direct ligand for the ERBB tyrosine kinase receptors. The multiple isoforms perform diverse functions: cysteine-rich domain containing isoforms (isoform 2-isoform 4) probably regulate the expression of nicotinic acetylcholine receptors at developing interneuronal synapses. Isoform Ig-NRG is required for the initial induction and/or maintenance of the mature levels of acetylcholine receptors at neuromuscular synapses. Binds to ERBB3 and integrins to form a complex which is essential for NRG1-ERBB signaling. The sequence is that of Pro-neuregulin-1, membrane-bound isoform (NRG1) from Gallus gallus (Chicken).